We begin with the raw amino-acid sequence, 660 residues long: Nuclear factor erythroid 2-related factor 3 (660 aa).

A disordered region spans residues 120–214; the sequence is SAVGDGGQSA…KTEEHKMACA (95 aa). Over residues 123–135 the composition is skewed to gly residues; that stretch reads GDGGQSASAGGGD. Composition is skewed to basic and acidic residues over residues 173 to 186 and 204 to 214; these read MLRE…HSSQ and SKTEEHKMACA. The 64-residue stretch at 541-604 folds into the bZIP domain; that stretch reads LIRDIRRRGK…DIMRQKLHGL (64 aa). Residues 543–562 form a basic motif region; the sequence is RDIRRRGKNKVAAQNCRKRK. Positions 566 to 573 are leucine-zipper; the sequence is ILNLEDDI.

Belongs to the bZIP family. CNC subfamily. Heterodimer with MAFG, MAFK and other small MAF proteins that binds to the MAF recognition elements (MARE). As to expression, high level expression in brain, thymus, testis and placenta. Medium level expression in uterus, stomach and lung. Low level expression in kidney. No expression in heart, liver, spleen and ovary.

It is found in the nucleus. Its function is as follows. Activates erythroid-specific, globin gene expression. This chain is Nuclear factor erythroid 2-related factor 3 (Nfe2l3), found in Mus musculus (Mouse).